Here is a 77-residue protein sequence, read N- to C-terminus: Conotoxin G11.1 (77 aa).

An N-terminal signal peptide occupies residues 1–20 (MKLFLAIVLILMLQFLSTGA). Residues 21-45 (ETSDNHASRSTTALRDWLLGPKAKR) constitute a propeptide that is removed on maturation. 4 cysteine pairs are disulfide-bonded: Cys46/Cys60, Cys53/Cys65, Cys59/Cys69, and Cys64/Cys76.

The protein belongs to the conotoxin I3 superfamily. As to expression, expressed by the venom duct.

It localises to the secreted. In terms of biological role, may embed in the membrane and bind to the voltage sensor domain of a ion channel. Does not induce paralysis when injected in fish, leading to the hypothesis that it may be part of the sedative nirvana cabal. This chain is Conotoxin G11.1, found in Conus geographus (Geography cone).